Here is a 512-residue protein sequence, read N- to C-terminus: 2-isopropylmalate synthase (512 aa).

The Pyruvate carboxyltransferase domain occupies isoleucine 4–lysine 266. Residues aspartate 13, histidine 201, histidine 203, and asparagine 237 each contribute to the Mn(2+) site. The tract at residues glutamate 390 to lysine 512 is regulatory domain.

This sequence belongs to the alpha-IPM synthase/homocitrate synthase family. LeuA type 1 subfamily. As to quaternary structure, homodimer. Requires Mn(2+) as cofactor.

It localises to the cytoplasm. The enzyme catalyses 3-methyl-2-oxobutanoate + acetyl-CoA + H2O = (2S)-2-isopropylmalate + CoA + H(+). Its pathway is amino-acid biosynthesis; L-leucine biosynthesis; L-leucine from 3-methyl-2-oxobutanoate: step 1/4. Functionally, catalyzes the condensation of the acetyl group of acetyl-CoA with 3-methyl-2-oxobutanoate (2-ketoisovalerate) to form 3-carboxy-3-hydroxy-4-methylpentanoate (2-isopropylmalate). The sequence is that of 2-isopropylmalate synthase from Listeria monocytogenes serotype 4a (strain HCC23).